Here is a 787-residue protein sequence, read N- to C-terminus: tRNA ligase 1 (787 aa).

Lys-117 functions as the N6-AMP-lysine intermediate in the catalytic mechanism.

The protein belongs to the TRL1 family.

It localises to the cytoplasm. It catalyses the reaction ATP + (ribonucleotide)n-3'-hydroxyl + 5'-phospho-(ribonucleotide)m = (ribonucleotide)n+m + AMP + diphosphate.. Required for the splicing of precursor tRNA molecules containing introns. The ligation activity requires three enzymatic activities: phosphorylation of the 5' terminus of the 3' half-tRNA in the presence of ATP, opening of the 2'3'-cyclic phosphodiester bond of the 5' half-tRNA leaving a 2'-phosphomonoester and ligation of the two tRNA halves in an ATP-dependent reaction. In Schizosaccharomyces pombe (strain 972 / ATCC 24843) (Fission yeast), this protein is tRNA ligase 1 (trl1).